Reading from the N-terminus, the 456-residue chain is Bifunctional protein GlmU (456 aa).

Residues 1 to 229 (MLNNAMSVVI…LSEVEGVNNR (229 aa)) form a pyrophosphorylase region. UDP-N-acetyl-alpha-D-glucosamine is bound by residues 11–14 (LAAG), Lys25, Gln76, 81–82 (GT), 103–105 (YGD), Gly140, Glu154, Asn169, and Asn227. Asp105 is a binding site for Mg(2+). Position 227 (Asn227) interacts with Mg(2+). Residues 230-250 (LQLSRLERVYQSEQAEKLLLA) are linker. The N-acetyltransferase stretch occupies residues 251–456 (GVMLRDPARF…EGWRRPVKKK (206 aa)). Residues Arg333 and Lys351 each contribute to the UDP-N-acetyl-alpha-D-glucosamine site. Residue His363 is the Proton acceptor of the active site. The UDP-N-acetyl-alpha-D-glucosamine site is built by Tyr366 and Asn377. Residues Ala380, 386 to 387 (NY), Ser405, Ala423, and Arg440 each bind acetyl-CoA.

In the N-terminal section; belongs to the N-acetylglucosamine-1-phosphate uridyltransferase family. It in the C-terminal section; belongs to the transferase hexapeptide repeat family. In terms of assembly, homotrimer. Requires Mg(2+) as cofactor.

It is found in the cytoplasm. The enzyme catalyses alpha-D-glucosamine 1-phosphate + acetyl-CoA = N-acetyl-alpha-D-glucosamine 1-phosphate + CoA + H(+). It catalyses the reaction N-acetyl-alpha-D-glucosamine 1-phosphate + UTP + H(+) = UDP-N-acetyl-alpha-D-glucosamine + diphosphate. It functions in the pathway nucleotide-sugar biosynthesis; UDP-N-acetyl-alpha-D-glucosamine biosynthesis; N-acetyl-alpha-D-glucosamine 1-phosphate from alpha-D-glucosamine 6-phosphate (route II): step 2/2. It participates in nucleotide-sugar biosynthesis; UDP-N-acetyl-alpha-D-glucosamine biosynthesis; UDP-N-acetyl-alpha-D-glucosamine from N-acetyl-alpha-D-glucosamine 1-phosphate: step 1/1. The protein operates within bacterial outer membrane biogenesis; LPS lipid A biosynthesis. Functionally, catalyzes the last two sequential reactions in the de novo biosynthetic pathway for UDP-N-acetylglucosamine (UDP-GlcNAc). The C-terminal domain catalyzes the transfer of acetyl group from acetyl coenzyme A to glucosamine-1-phosphate (GlcN-1-P) to produce N-acetylglucosamine-1-phosphate (GlcNAc-1-P), which is converted into UDP-GlcNAc by the transfer of uridine 5-monophosphate (from uridine 5-triphosphate), a reaction catalyzed by the N-terminal domain. The sequence is that of Bifunctional protein GlmU from Escherichia coli O139:H28 (strain E24377A / ETEC).